The sequence spans 203 residues: Thymidylate kinase (203 aa).

10 to 17 (GVEGSGKT) contributes to the ATP binding site.

The protein belongs to the thymidylate kinase family.

It carries out the reaction dTMP + ATP = dTDP + ADP. Its function is as follows. Phosphorylation of dTMP to form dTDP in both de novo and salvage pathways of dTTP synthesis. The sequence is that of Thymidylate kinase from Carboxydothermus hydrogenoformans (strain ATCC BAA-161 / DSM 6008 / Z-2901).